Here is a 181-residue protein sequence, read N- to C-terminus: RNA-binding protein (181 aa).

The tract at residues 106-181 (FLTSVNPGES…DANTRKSKRK (76 aa)) is disordered. Residues 141–157 (RNSKKGAKKSSSARKKK) are compositionally biased toward basic residues. Low complexity predominate over residues 160-172 (SSNSETDLSSDSD).

It belongs to the phytoreovirus RNA-binding protein family.

Its subcellular location is the host cytoplasm. Functionally, constituent of viral factories. Binds to ssRNA and dsRNA. The polypeptide is RNA-binding protein (Rice dwarf virus (isolate Akita) (RDV)).